We begin with the raw amino-acid sequence, 348 residues long: MENSEQLVWLHGEPQATGSLKSTAEDFLVVEDLGFQPDGDGEQVLVRVRKRGCNTQFVAEMLAKFARLPLRAVSYAGLKDRHAVTEQWFCLHMPGKETPDFSSLELEGCDVLEVIRHRRKLRIGTLRGNHFALVLRQVSDRNEVDARLAQIAASGVPNYFGSQRFGRNGNNLEQARLWANNDIRVKERSKRSFYLSASRSAMFNQVASARLAGQQAKTVLCGDALQLTGRGSWFVAKADELETLQVRLDAGELQITAPLPGDDELGTQDDALAFEEQALTGQETLWSLVKRERVEPARRAVLLYPQQMQWEWQDDVTVAVKFWLPAGSFATSVVREVLHSQQDIDIGA.

Phe-27 provides a ligand contact to substrate. Asp-80 (nucleophile) is an active-site residue. Residue Asn-129 participates in substrate binding. The 149-residue stretch at 155–303 (GVPNYFGSQR…VEPARRAVLL (149 aa)) folds into the TRUD domain. Position 329 (Phe-329) interacts with substrate.

Belongs to the pseudouridine synthase TruD family.

The catalysed reaction is uridine(13) in tRNA = pseudouridine(13) in tRNA. Functionally, responsible for synthesis of pseudouridine from uracil-13 in transfer RNAs. The chain is tRNA pseudouridine synthase D from Pectobacterium atrosepticum (strain SCRI 1043 / ATCC BAA-672) (Erwinia carotovora subsp. atroseptica).